The chain runs to 165 residues: UPF0114 protein in repA1-repA2 intergenic region (165 aa).

Transmembrane regions (helical) follow at residues 10-32 (YASR…LLTL), 53-75 (LVLV…MVMF), and 134-156 (DQIM…MACI).

Belongs to the UPF0114 family.

It localises to the cell membrane. This chain is UPF0114 protein in repA1-repA2 intergenic region, found in Buchnera aphidicola subsp. Baizongia pistaciae (strain Bp).